The primary structure comprises 221 residues: MNYLTSQLLINEEIETINNNLKNQSDLWEDGKKTAGSYASKVKNNLQINRNSELSKKLAELIKNKLLANPLIKSFALPKLIHGIMFTKSQKNMGYGRHVDNPFMSSGRSDLSFTISLTPKDLYEGGELIIETINSENKFKLNAGEIIIYPSTYLHSVEKILSGERIVCVGWIESYVKSIEKREYLFDLDAGAKGLLAKHGRSDELDLIFKSYSNLLRLLGN.

One can recognise a Fe2OG dioxygenase domain in the interval 80–174 (LIHGIMFTKS…RIVCVGWIES (95 aa)). Histidine 98, aspartate 100, and histidine 155 together coordinate Fe cation. Arginine 165 is a binding site for 2-oxoglutarate.

Requires Fe(2+) as cofactor. The cofactor is L-ascorbate.

This is PKHD-type hydroxylase A9601_13531 from Prochlorococcus marinus (strain AS9601).